The following is a 127-amino-acid chain: Riboflavin kinase (127 aa).

Residue 10-15 participates in CDP binding; that stretch reads GLGEGR. 2 residues coordinate Mg(2+): Thr-39 and Asn-41. 2 residues coordinate FMN: Thr-96 and Glu-104. 109–112 lines the CDP pocket; the sequence is VHLR.

It belongs to the archaeal riboflavin kinase family. Mg(2+) is required as a cofactor.

The enzyme catalyses riboflavin + CTP = CDP + FMN + H(+). The protein operates within cofactor biosynthesis; FMN biosynthesis; FMN from riboflavin (CTP route): step 1/1. Its function is as follows. Catalyzes the CTP-dependent phosphorylation of riboflavin (vitamin B2) to form flavin mononucleotide (FMN). The sequence is that of Riboflavin kinase from Methanococcus maripaludis (strain C7 / ATCC BAA-1331).